The primary structure comprises 58 residues: Large ribosomal subunit protein bL32 (58 aa).

The segment covering 1–19 has biased composition (basic residues); sequence MAVPKKRTSKSKKNMRKAN. The interval 1–58 is disordered; it reads MAVPKKRTSKSKKNMRKANWKNQAKLAAKKALSLGKSVETQRSHSFVHPRYEEEEEED. The span at 20–32 shows a compositional bias: low complexity; the sequence is WKNQAKLAAKKAL.

Belongs to the bacterial ribosomal protein bL32 family.

The polypeptide is Large ribosomal subunit protein bL32 (Trichodesmium erythraeum (strain IMS101)).